Consider the following 304-residue polypeptide: Homoserine kinase (304 aa).

91–101 (PLGKGMGSSAA) serves as a coordination point for ATP.

It belongs to the GHMP kinase family. Homoserine kinase subfamily.

Its subcellular location is the cytoplasm. It catalyses the reaction L-homoserine + ATP = O-phospho-L-homoserine + ADP + H(+). It functions in the pathway amino-acid biosynthesis; L-threonine biosynthesis; L-threonine from L-aspartate: step 4/5. Catalyzes the ATP-dependent phosphorylation of L-homoserine to L-homoserine phosphate. This chain is Homoserine kinase, found in Solibacter usitatus (strain Ellin6076).